The chain runs to 347 residues: Zinc-type alcohol dehydrogenase-like protein C16A3.02c (347 aa).

Belongs to the zinc-containing alcohol dehydrogenase family. Quinone oxidoreductase subfamily.

The protein resides in the golgi apparatus. The protein localises to the endoplasmic reticulum. This chain is Zinc-type alcohol dehydrogenase-like protein C16A3.02c, found in Schizosaccharomyces pombe (strain 972 / ATCC 24843) (Fission yeast).